A 969-amino-acid chain; its full sequence is Proprotein convertase subtilisin/kexin type 6 (969 aa).

Residues 1 to 16 are compositionally biased toward pro residues; sequence MPPRAPPAPGPRPPPR. The disordered stretch occupies residues 1–39; sequence MPPRAPPAPGPRPPPRAAAATDTAAGAGGAGGAGGAGGP. A signal peptide spans 1 to 63; that stretch reads MPPRAPPAPG…LLALPAACSA (63 aa). Over residues 26 to 39 the composition is skewed to gly residues; it reads GAGGAGGAGGAGGP. The propeptide occupies 64–149; it reads PPPRPVYTNH…QQEVKRRVKR (86 aa). A Peptidase S8 domain is found at 168-487; the sequence is MWYLHCGDKN…FGLVDAEALV (320 aa). Active-site charge relay system residues include Asp-205 and His-246. Asn-259 carries an N-linked (GlcNAc...) asparagine glycan. Residue Ser-420 is the Charge relay system of the active site. The region spanning 495 to 635 is the P/Homo B domain; sequence AVPSQHMCVA…SLILYGTAEH (141 aa). Residues 553-555 carry the Cell attachment site motif; the sequence is RGD. A disordered region spans residues 658–683; it reads EPPKAALSPSQVEVPEDEEDYTAQST. 5 FU repeats span residues 692-739, 743-790, 794-838, 842-887, and 895-943; these read TSVC…GYFG, ARRC…GFYA, QKNC…GTYF, LIRC…GFYP, and HKVC…ETFC. The segment at 695–930 is CRM (Cys-rich motif); sequence CHPECGDKGC…GFTQLGTSCI (236 aa). 2 N-linked (GlcNAc...) asparagine glycosylation sites follow: Asn-914 and Asn-932. The 39-residue stretch at 931–969 folds into the PLAC domain; sequence TNHTCSNADETFCEMVKSNRLCERKLFIQFCCRTCLLAG.

This sequence belongs to the peptidase S8 family. The PACE4A-I precursor protein seems to exist in the reticulum endoplasmic as both a monomer and a dimer-sized complex whereas mature PACE4A-I exists only as a monomer, suggesting that propeptide cleavage affects its tertiary or quaternary structure. Interacts (immature form including the propeptide) with RCN3; probably involved in the maturation and the secretion of PCSK6. Requires Ca(2+) as cofactor. Each PACE4 isoform exhibits a unique restricted distribution. Isoform PACE4A-I is expressed in heart, brain, placenta, lung, skeletal muscle, kidney, pancreas, but at comparatively higher levels in the liver. Isoform PACE4A-II is at least expressed in placenta. Isoform PACE4B was only found in the embryonic kidney cell line from which it was isolated. Isoform PACE4C and isoform PACE4D are expressed in placenta. Isoform PACE4E-I is expressed in cerebellum, placenta and pituitary. Isoform PACE4E-II is at least present in cerebellum.

The protein localises to the secreted. The protein resides in the endoplasmic reticulum. It is found in the endomembrane system. Serine endoprotease that processes various proproteins by cleavage at paired basic amino acids, recognizing the RXXX[KR]R consensus motif. Likely functions in the constitutive secretory pathway, with unique restricted distribution in both neuroendocrine and non-neuroendocrine tissues. In Homo sapiens (Human), this protein is Proprotein convertase subtilisin/kexin type 6 (PCSK6).